The sequence spans 873 residues: Probable beta-glucosidase A (873 aa).

An N-terminal signal peptide occupies residues 1–19 (MRFGWLEVAALTAASVANA). Residues Asn-71, Asn-222, and Asn-263 are each glycosylated (N-linked (GlcNAc...) asparagine). The active site involves Asp-291. 9 N-linked (GlcNAc...) asparagine glycosylation sites follow: Asn-326, Asn-333, Asn-365, Asn-453, Asn-534, Asn-553, Asn-575, Asn-679, and Asn-725. The disordered stretch occupies residues 731 to 764 (DSSDDPNYGWEDSEYIPEGARDGSPQPLLKAGGA).

It belongs to the glycosyl hydrolase 3 family.

It is found in the secreted. It carries out the reaction Hydrolysis of terminal, non-reducing beta-D-glucosyl residues with release of beta-D-glucose.. It functions in the pathway glycan metabolism; cellulose degradation. Its function is as follows. Beta-glucosidases are one of a number of cellulolytic enzymes involved in the degradation of cellulosic biomass. Catalyzes the last step releasing glucose from the inhibitory cellobiose. This is Probable beta-glucosidase A (bglA) from Aspergillus fumigatus (strain CBS 144.89 / FGSC A1163 / CEA10) (Neosartorya fumigata).